A 399-amino-acid polypeptide reads, in one-letter code: Serine palmitoyltransferase (399 aa).

Pyridoxal 5'-phosphate contacts are provided by residues 113–114, histidine 213, threonine 241, and serine 243; that span reads GF. Lysine 244 is subject to N6-(pyridoxal phosphate)lysine.

The protein belongs to the class-II pyridoxal-phosphate-dependent aminotransferase family. As to quaternary structure, homodimer. The cofactor is pyridoxal 5'-phosphate.

Its subcellular location is the cytoplasm. The catalysed reaction is L-serine + hexadecanoyl-CoA + H(+) = 3-oxosphinganine + CO2 + CoA. The protein operates within lipid metabolism; sphingolipid metabolism. Functionally, catalyzes the condensation of L-serine with palmitoyl-CoA (hexadecanoyl-CoA) to produce 3-oxosphinganine. This is Serine palmitoyltransferase from Sphingobacterium spiritivorum (Flavobacterium spiritivorum).